A 525-amino-acid polypeptide reads, in one-letter code: GMP synthase [glutamine-hydrolyzing] (525 aa).

A Glutamine amidotransferase type-1 domain is found at Arg9–Leu207. The active-site Nucleophile is Cys86. Catalysis depends on residues His181 and Glu183. The GMPS ATP-PPase domain maps to Trp208 to Arg400. Ser235–Ser241 serves as a coordination point for ATP.

In terms of assembly, homodimer.

It carries out the reaction XMP + L-glutamine + ATP + H2O = GMP + L-glutamate + AMP + diphosphate + 2 H(+). It participates in purine metabolism; GMP biosynthesis; GMP from XMP (L-Gln route): step 1/1. Functionally, catalyzes the synthesis of GMP from XMP. The sequence is that of GMP synthase [glutamine-hydrolyzing] from Cellvibrio japonicus (strain Ueda107) (Pseudomonas fluorescens subsp. cellulosa).